The chain runs to 436 residues: GTPase Der (436 aa).

EngA-type G domains follow at residues 4–167 (PVVA…PKRG) and 176–351 (IKFC…ENHA). GTP contacts are provided by residues 10-17 (GRPNVGKS), 57-61 (DTGGI), 119-122 (NKID), 182-189 (GRPNVGKS), 229-233 (DTAGM), and 294-297 (NKWD). One can recognise a KH-like domain in the interval 352-436 (MRVQTNVLNE…PIKIIARPRK (85 aa)).

This sequence belongs to the TRAFAC class TrmE-Era-EngA-EngB-Septin-like GTPase superfamily. EngA (Der) GTPase family. Associates with the 50S ribosomal subunit.

In terms of biological role, GTPase that plays an essential role in the late steps of ribosome biogenesis. The sequence is that of GTPase Der from Geobacillus sp. (strain WCH70).